A 108-amino-acid polypeptide reads, in one-letter code: PTS system fructose-like EIIB component 1 (108 aa).

One can recognise a PTS EIIB type-2 domain in the interval 1 to 104 (MSKKLIALCA…IIKEIEEMIA (104 aa)). Cys11 (phosphocysteine intermediate) is an active-site residue. The residue at position 11 (Cys11) is a Phosphocysteine; by EIIA.

Its subcellular location is the cytoplasm. The enzyme catalyses D-fructose(out) + N(pros)-phospho-L-histidyl-[protein] = D-fructose 1-phosphate(in) + L-histidyl-[protein]. Its function is as follows. The phosphoenolpyruvate-dependent sugar phosphotransferase system (sugar PTS), a major carbohydrate active transport system, catalyzes the phosphorylation of incoming sugar substrates concomitantly with their translocation across the cell membrane. The enzyme II FryABC PTS system is involved in fructose transport. This chain is PTS system fructose-like EIIB component 1 (fryB), found in Escherichia coli O157:H7.